Consider the following 211-residue polypeptide: Thiamine-phosphate synthase (211 aa).

Residues 37–41 and Asn-69 each bind 4-amino-2-methyl-5-(diphosphooxymethyl)pyrimidine; that span reads QLRIK. Residues Asp-70 and Asp-89 each coordinate Mg(2+). Ser-108 is a 4-amino-2-methyl-5-(diphosphooxymethyl)pyrimidine binding site. 134–136 contributes to the 2-[(2R,5Z)-2-carboxy-4-methylthiazol-5(2H)-ylidene]ethyl phosphate binding site; that stretch reads TQT. Lys-137 serves as a coordination point for 4-amino-2-methyl-5-(diphosphooxymethyl)pyrimidine. Residues Gly-166 and 186-187 contribute to the 2-[(2R,5Z)-2-carboxy-4-methylthiazol-5(2H)-ylidene]ethyl phosphate site; that span reads VS.

Belongs to the thiamine-phosphate synthase family. Mg(2+) serves as cofactor.

It catalyses the reaction 2-[(2R,5Z)-2-carboxy-4-methylthiazol-5(2H)-ylidene]ethyl phosphate + 4-amino-2-methyl-5-(diphosphooxymethyl)pyrimidine + 2 H(+) = thiamine phosphate + CO2 + diphosphate. The catalysed reaction is 2-(2-carboxy-4-methylthiazol-5-yl)ethyl phosphate + 4-amino-2-methyl-5-(diphosphooxymethyl)pyrimidine + 2 H(+) = thiamine phosphate + CO2 + diphosphate. The enzyme catalyses 4-methyl-5-(2-phosphooxyethyl)-thiazole + 4-amino-2-methyl-5-(diphosphooxymethyl)pyrimidine + H(+) = thiamine phosphate + diphosphate. It participates in cofactor biosynthesis; thiamine diphosphate biosynthesis; thiamine phosphate from 4-amino-2-methyl-5-diphosphomethylpyrimidine and 4-methyl-5-(2-phosphoethyl)-thiazole: step 1/1. Functionally, condenses 4-methyl-5-(beta-hydroxyethyl)thiazole monophosphate (THZ-P) and 2-methyl-4-amino-5-hydroxymethyl pyrimidine pyrophosphate (HMP-PP) to form thiamine monophosphate (TMP). The polypeptide is Thiamine-phosphate synthase (Salmonella newport (strain SL254)).